An 85-amino-acid polypeptide reads, in one-letter code: MAHKKGVGSSRNGRDSEAKRLGVKAFGGELVSGGSIIVRQRGTKFHAGENTGLGKDHTIYAKVDGRVKFEVKGAFGRQYVSIIPA.

This sequence belongs to the bacterial ribosomal protein bL27 family.

The sequence is that of Large ribosomal subunit protein bL27 from Cellvibrio japonicus (strain Ueda107) (Pseudomonas fluorescens subsp. cellulosa).